A 159-amino-acid polypeptide reads, in one-letter code: Small ribosomal subunit protein uS17y (159 aa).

Belongs to the universal ribosomal protein uS17 family.

It localises to the cytoplasm. The protein is Small ribosomal subunit protein uS17y (RPS11B) of Arabidopsis thaliana (Mouse-ear cress).